We begin with the raw amino-acid sequence, 1013 residues long: Putative helicase mov-10-B.1 (1013 aa).

Polar residues-rich tracts occupy residues 91–103 (QWSR…QNHA) and 113–123 (RPSTTRVSDPS). The tract at residues 91 to 129 (QWSRPYRSQQNHATPHLNDAISRPSTTRVSDPSSVPEPE) is disordered. 550-557 (GPPGTGKT) contacts ATP. The DEAG box signature appears at 672–675 (DEAG).

It belongs to the DNA2/NAM7 helicase family. SDE3 subfamily.

The protein resides in the cytoplasm. Its subcellular location is the P-body. The enzyme catalyses ATP + H2O = ADP + phosphate + H(+). Functionally, probable RNA helicase. Required for RNA-mediated gene silencing by the RNA-induced silencing complex (RISC). Required for both miRNA-mediated translational repression and miRNA-mediated cleavage of complementary mRNAs by RISC. This Danio rerio (Zebrafish) protein is Putative helicase mov-10-B.1 (mov10b.1).